The following is a 203-amino-acid chain: Ras-related protein RABG3b (203 aa).

Residue 15–22 (GDSGVGKT) coordinates GTP. Positions 37–45 (YKATIGADF) match the Effector region motif. GTP-binding positions include 63-67 (DTAGQ), 125-128 (NKVD), and 158-159 (SA). 2 S-geranylgeranyl cysteine lipidation sites follow: Cys201 and Cys203. Cys203 carries the cysteine methyl ester modification.

Belongs to the small GTPase superfamily. Rab family. In terms of assembly, interacts with VPS39. As to expression, expressed in xylem cells of inflorescence stems.

Its subcellular location is the cell membrane. Functionally, intracellular vesicle trafficking and protein transport. Functions in autophagy. Involved in xylem and tracheary element differentiation. In Arabidopsis thaliana (Mouse-ear cress), this protein is Ras-related protein RABG3b (RABG3B).